We begin with the raw amino-acid sequence, 460 residues long: Cyclin-T1-2 (460 aa).

2 disordered regions span residues 1–20 and 285–345; these read MDEA…SSVA and QPIS…QDHS. Basic and acidic residues predominate over residues 314–324; it reads SDDHSVHDGSR. The span at 332-345 shows a compositional bias: polar residues; that stretch reads NSESEAQKNLQDHS.

The protein belongs to the cyclin family. Cyclin T subfamily.

The protein is Cyclin-T1-2 (CYCT1-2) of Arabidopsis thaliana (Mouse-ear cress).